We begin with the raw amino-acid sequence, 221 residues long: MTETSPTPVLDTAQARVLGCLIEKEATTPDAYPLTVNAAQVAANQKTAREPVLNLQTGVVHHALRQLENLGLVRQQFCSRAERYEHRLGSVLDLTRQQVALIGLLLRGPQTLGELYARSERLARFADTDDVRHHLDRLIQRGLAAQLPRASGQREDRYAHLLSGELDVEALQAATARAAQGARSGSDTSELEARVQSLEATVADMQDALAALQARLNAAGA.

Belongs to the UPF0502 family.

The sequence is that of UPF0502 protein XOO0224 from Xanthomonas oryzae pv. oryzae (strain MAFF 311018).